Consider the following 104-residue polypeptide: Large ribosomal subunit protein uL24 (104 aa).

It belongs to the universal ribosomal protein uL24 family. In terms of assembly, part of the 50S ribosomal subunit.

One of two assembly initiator proteins, it binds directly to the 5'-end of the 23S rRNA, where it nucleates assembly of the 50S subunit. Functionally, one of the proteins that surrounds the polypeptide exit tunnel on the outside of the subunit. This is Large ribosomal subunit protein uL24 from Idiomarina loihiensis (strain ATCC BAA-735 / DSM 15497 / L2-TR).